Consider the following 400-residue polypeptide: MIIKPRVRGFICVTTHPVGCEANVKEQIDYVTSHGPIANGPKKVLVIGASTGYGLAARISAAFGSGADTLGVFFERAGSETKPGTAGWYNSAAFEKFAAEKGLYARSINGDAFSDKVKQVTIDTIKQDLGKVDLVVYSLAAPRRTHPKTGETISSTLKPVGKAVTFRGLDTDKEVIREVSLEPATQEEIDGTVAVMGGEDWQMWIDALDEAGVLADGAKTTAFTYLGEQITHDIYWNGSIGEAKKDLDKKVLSIRDKLAAHGGDARVSVLKAVVTQASSAIPMMPLYLSLLFKVMKETGTHEGCIEQVYGLLKDSLYGATPHVDEEGRLRADYKELDPQVQDKVVAMWDKVTNENLYEMTDFAGYKTEFLRLFGFEIAGVDYDADVNPDVKIPGIIDTTV.

NAD(+) is bound by residues 48–53 (GASTGY), 74–75 (FE), 111–112 (DA), and 139–140 (LA). Tyr-225 is a substrate binding site. Tyr-235 serves as the catalytic Proton donor. NAD(+) is bound by residues Lys-244 and 273-275 (VVT).

Belongs to the TER reductase family. In terms of assembly, monomer.

The catalysed reaction is a 2,3-saturated acyl-[ACP] + NAD(+) = a (2E)-enoyl-[ACP] + NADH + H(+). It functions in the pathway lipid metabolism; fatty acid biosynthesis. In terms of biological role, involved in the final reduction of the elongation cycle of fatty acid synthesis (FAS II). Catalyzes the reduction of a carbon-carbon double bond in an enoyl moiety that is covalently linked to an acyl carrier protein (ACP). The sequence is that of Enoyl-[acyl-carrier-protein] reductase [NADH] from Burkholderia cenocepacia (strain HI2424).